Consider the following 730-residue polypeptide: Rap1 GTPase-activating protein 2 (730 aa).

The region spanning 247–463 (IVAYDEHEVN…RTRAALLDNL (217 aa)) is the Rap-GAP domain. Disordered regions lie at residues 510–668 (MVGS…STAS) and 698–730 (SRSPTDIKNRNSPRSNLKFRFDKLSHGSSSTSH). Polar residues-rich tracts occupy residues 535–557 (GEVTKTTFSPPVSAATAKNQSRS) and 597–612 (HSSQEMKSETSSNPSS). A compositionally biased stretch (basic and acidic residues) spans 617 to 630 (PNKDRPFVKLKENG). The span at 631–651 (RSNISRSSSSTSSFSSTAGES) shows a compositional bias: low complexity. The segment covering 699-712 (RSPTDIKNRNSPRS) has biased composition (polar residues).

Its subcellular location is the cytoplasm. Functionally, GTPase activator for the nuclear Ras-related regulatory protein RAP-1A (KREV-1), converting it to the putatively inactive GDP-bound state. The sequence is that of Rap1 GTPase-activating protein 2 (RAP1GAP2) from Gallus gallus (Chicken).